The sequence spans 773 residues: ATP-dependent RNA helicase MAK5 (773 aa).

Residues 73–82 (KDSNKEKVGD) show a composition bias toward basic and acidic residues. 2 disordered regions span residues 73–99 (KDSN…ESEL) and 114–144 (SAAS…VDED). Acidic residues predominate over residues 83–99 (DQESVENESGSDSESEL). Position 135 is a phosphothreonine (Thr-135). At Ser-138 the chain carries Phosphoserine. The Q motif signature appears at 171–199 (EWTNLAPLSMTILQSLQNLNFLRPTEIQK). The region spanning 202–399 (IPVIMQGVDV…SSSRQVKDRR (198 aa)) is the Helicase ATP-binding domain. Position 215 to 222 (215 to 222 (ASTGSGKT)) interacts with ATP. The DEAD box motif lies at 333–336 (DEAD). Positions 452–615 (DLYCYYFLTM…STDLNSRSTN (164 aa)) constitute a Helicase C-terminal domain. Ser-678 is modified (phosphoserine).

It belongs to the DEAD box helicase family. DDX24/MAK5 subfamily.

It is found in the nucleus. The protein resides in the nucleolus. It catalyses the reaction ATP + H2O = ADP + phosphate + H(+). In terms of biological role, ATP-binding RNA helicase involved in the biogenesis of 60S ribosomal subunits and is required for the normal formation of 25S and 5.8S rRNAs. Required for the maintenance of dsRNA killer plasmid. This chain is ATP-dependent RNA helicase MAK5 (MAK5), found in Saccharomyces cerevisiae (strain ATCC 204508 / S288c) (Baker's yeast).